The chain runs to 91 residues: Insertion element IS1 1 protein InsA (91 aa).

This sequence belongs to the IS1 elements InsA family.

Absolutely required for transposition of IS1. In Escherichia coli (strain K12), this protein is Insertion element IS1 1 protein InsA (insA1).